The following is an 833-amino-acid chain: DNA polymerase I, thermostable (833 aa).

One can recognise a 5'-3' exonuclease domain in the interval 173–267 (VPPERWVDFR…FKALRRRTPD (95 aa)). A polymerase region spans residues 412–833 (ERLFQNLFPR…GRDWLEAKQD (422 aa)).

Belongs to the DNA polymerase type-A family.

It catalyses the reaction DNA(n) + a 2'-deoxyribonucleoside 5'-triphosphate = DNA(n+1) + diphosphate. In terms of biological role, in addition to polymerase activity, this DNA polymerase exhibits 5'-3' exonuclease activity. Unlikely to have 3'-5' exonuclease activity due to absence of a 3'-5' exonuclease domain. The chain is DNA polymerase I, thermostable (polA) from Thermus filiformis.